Reading from the N-terminus, the 299-residue chain is Peroxisomal biogenesis factor 19 (299 aa).

The interval M1–L63 is disordered. A2 carries the post-translational modification N-acetylalanine. Residues A2 to G56 are docking to the peroxisome membrane and binding to PEX3. The necessary for PEX19 function on peroxisome biogenesis stretch occupies residues A2–M91. Positions R16 to D27 are enriched in acidic residues. Residues S35, S54, and S66 each carry the phosphoserine modification. At T236 the chain carries Phosphothreonine. Residue C296 is modified to Cysteine methyl ester. C296 carries the S-farnesyl cysteine lipid modification. A propeptide spans L297–M299 (removed in mature form).

Belongs to the peroxin-19 family. Interacts with a broad range of peroxisomal membrane proteins, including PEX3, PEX10, PEX11A, PEX11B, PEX12, PEX13, PEX14 and PEX16, PXMP2/PMP22, PXMP4/PMP24, SLC25A17/PMP34, ABCD1/ALDP, ABCD2/ALDRP, and ABCD3/PMP70. Also interacts with the tumor suppressor CDKN2A/p19ARF. Ubiquitous.

It is found in the cytoplasm. It localises to the peroxisome membrane. Functionally, necessary for early peroxisomal biogenesis. Acts both as a cytosolic chaperone and as an import receptor for peroxisomal membrane proteins (PMPs). Binds and stabilizes newly synthesized PMPs in the cytoplasm by interacting with their hydrophobic membrane-spanning domains, and targets them to the peroxisome membrane by binding to the integral membrane protein PEX3. Excludes CDKN2A from the nucleus and prevents its interaction with MDM2, which results in active degradation of TP53. The polypeptide is Peroxisomal biogenesis factor 19 (PEX19) (Cricetulus griseus (Chinese hamster)).